The sequence spans 42 residues: Large ribosomal subunit protein bL36 (42 aa).

It belongs to the bacterial ribosomal protein bL36 family.

The sequence is that of Large ribosomal subunit protein bL36 from Ehrlichia chaffeensis (strain ATCC CRL-10679 / Arkansas).